The sequence spans 504 residues: AMP phosphorylase 1 (504 aa).

Residues Gly-169, 195–200 (SRAITS), and Thr-204 each bind AMP. Asp-257 serves as the catalytic Proton donor. Residues Ser-265 and Lys-289 each coordinate AMP.

It belongs to the thymidine/pyrimidine-nucleoside phosphorylase family. Type 2 subfamily.

The enzyme catalyses AMP + phosphate = alpha-D-ribose 1,5-bisphosphate + adenine. It catalyses the reaction CMP + phosphate = cytosine + alpha-D-ribose 1,5-bisphosphate. The catalysed reaction is UMP + phosphate = alpha-D-ribose 1,5-bisphosphate + uracil. Functionally, catalyzes the conversion of AMP and phosphate to adenine and ribose 1,5-bisphosphate (R15P). Exhibits phosphorylase activity toward CMP and UMP in addition to AMP. Functions in an archaeal AMP degradation pathway, together with R15P isomerase and RubisCO. This is AMP phosphorylase 1 from Archaeoglobus fulgidus (strain ATCC 49558 / DSM 4304 / JCM 9628 / NBRC 100126 / VC-16).